The following is a 46-amino-acid chain: Large ribosomal subunit protein bL36 (46 aa).

It belongs to the bacterial ribosomal protein bL36 family.

The protein is Large ribosomal subunit protein bL36 of Salmonella agona (strain SL483).